A 351-amino-acid polypeptide reads, in one-letter code: MRKIIHVDMDCFFAAVEMRDNPALRDIPIAIGGSRERRGVISTANYPARKFGVRSAMPTGMALKLCPHLTLLPGRFDAYKEASNHIREIFSRYTSRIEPLSLDEAYLDVTDSVHCHGSATLIAQEIRQTIFSELQLTASAGVAPVKFLAKIASDMNKPNGQFVITPAEVPAFLQTLPLAKIPGVGKVSAAKLEAMGLRTCGDVQKCDLVILLKRFGKFGRILWERSQGIDERDVNSERLRKSVGVERTMAEDIHHWSECEAIIERLYPELERRLAKVKPDLLIARQGVKLKFDDFQQTTQEHVWPRLNKADLIATARKTWDERRGGRGVRLVGLHVTLLDPQMERQLVLGL.

A UmuC domain is found at 4-185 (IIHVDMDCFF…LPLAKIPGVG (182 aa)). Positions 8 and 103 each coordinate Mg(2+). Residue glutamate 104 is part of the active site.

Belongs to the DNA polymerase type-Y family. Monomer. Requires Mg(2+) as cofactor.

The protein localises to the cytoplasm. The catalysed reaction is DNA(n) + a 2'-deoxyribonucleoside 5'-triphosphate = DNA(n+1) + diphosphate. In terms of biological role, poorly processive, error-prone DNA polymerase involved in untargeted mutagenesis. Copies undamaged DNA at stalled replication forks, which arise in vivo from mismatched or misaligned primer ends. These misaligned primers can be extended by PolIV. Exhibits no 3'-5' exonuclease (proofreading) activity. May be involved in translesional synthesis, in conjunction with the beta clamp from PolIII. The chain is DNA polymerase IV from Escherichia coli O9:H4 (strain HS).